Here is a 213-residue protein sequence, read N- to C-terminus: Endonuclease III (213 aa).

The 20-residue stretch at 108-127 (FKELIKLPGVGRKTANVVLN) folds into the HhH domain. [4Fe-4S] cluster contacts are provided by Cys187, Cys194, Cys197, and Cys203.

The protein belongs to the Nth/MutY family. [4Fe-4S] cluster serves as cofactor.

It catalyses the reaction 2'-deoxyribonucleotide-(2'-deoxyribose 5'-phosphate)-2'-deoxyribonucleotide-DNA = a 3'-end 2'-deoxyribonucleotide-(2,3-dehydro-2,3-deoxyribose 5'-phosphate)-DNA + a 5'-end 5'-phospho-2'-deoxyribonucleoside-DNA + H(+). In terms of biological role, DNA repair enzyme that has both DNA N-glycosylase activity and AP-lyase activity. The DNA N-glycosylase activity releases various damaged pyrimidines from DNA by cleaving the N-glycosidic bond, leaving an AP (apurinic/apyrimidinic) site. The AP-lyase activity cleaves the phosphodiester bond 3' to the AP site by a beta-elimination, leaving a 3'-terminal unsaturated sugar and a product with a terminal 5'-phosphate. This is Endonuclease III from Rickettsia felis (strain ATCC VR-1525 / URRWXCal2) (Rickettsia azadi).